The chain runs to 1522 residues: Sodium channel protein 1 brain (1522 aa).

The Cytoplasmic segment spans residues 1–50 (MDEKYTAKNRDKTFVVIEKRFKKNIIHRFSAKRSLFLFTPRNPIRRLAVC). The I repeat unit spans residues 41–342 (RNPIRRLAVC…VATAYELEVK (302 aa)). Residues 51–70 (IATNVCFDYFLMFTIMINCV) traverse the membrane as a helical segment. The Extracellular segment spans residues 71 to 77 (FLAMPDI). The helical transmembrane segment at 78 to 99 (SEFAEYIFLGIYTMEMAIKLVA) threads the bilayer. The Cytoplasmic segment spans residues 100–112 (GGFFIDKYTYLRD). Residues 113 to 134 (AWNCLDFTVIMISYITLLLQTI) form a helical membrane-spanning segment. Over 135 to 143 (NDKVISDIT) the chain is Extracellular. A helical; Voltage-sensor membrane pass occupies residues 144–167 (GLRTFRVLRALRTLSIIPGLKTMV). Residues 168 to 179 (NALLRALRMLIS) are Cytoplasmic-facing. Residues 180–201 (VLILILFCLWIFSQAGVQLFGG) form a helical membrane-spanning segment. The Extracellular segment spans residues 202 to 278 (ALRHKCVLQI…PNYGYTNFDS (77 aa)). Cysteine 207 and cysteine 255 are disulfide-bonded. N-linked (GlcNAc...) asparagine glycosylation is found at asparagine 248 and asparagine 258. An intramembrane region (pore-forming) is located at residues 279–303 (IGWSMLISFQLLTQDYWEDVYNKVI). Over 304-308 (RAHSP) the chain is Extracellular. Residues 309–331 (WTVIYFIVINFFGSLYLMNLMLA) traverse the membrane as a helical segment. The Cytoplasmic segment spans residues 332 to 406 (VVATAYELEV…WLRVQSFAHC (75 aa)). Residues 393–647 (CYNPWLRVQS…EQEVEVSSFA (255 aa)) form an II repeat. The helical transmembrane segment at 407–426 (IITDSFTEVFIIFIIVLNTV) threads the bilayer. The Extracellular portion of the chain corresponds to 427-442 (FLAMEHHGMSMELKNV). The chain crosses the membrane as a helical span at residues 443–464 (LKVANYVFTTVFVLEAILKLLA). At 465–472 (FNKQYFKS) the chain is on the cytoplasmic side. A helical membrane pass occupies residues 473–491 (GWNICDLVVVVASLIDLGV). Residues 492–498 (EGLKGVS) lie on the Extracellular side of the membrane. The chain crosses the membrane as a helical; Voltage-sensor span at residues 499–522 (VFRSFRLLRVFHLAQSWTTMRLLL). At 523 to 531 (CIILNTLGS) the chain is on the cytoplasmic side. The chain crosses the membrane as a helical span at residues 532 to 553 (LGYLTIILIIVIYIFAVTGLQL). The Extracellular segment spans residues 554-575 (FHTEYTPDKFRGEPVPRWNFND). The segment at residues 576–596 (FLHSFMMVFRILCGEWIEPMY) is an intramembrane region (pore-forming). At 597-607 (DCMRACNGLCF) the chain is on the extracellular side. The cysteines at positions 598 and 606 are disulfide-linked. Residues 608-628 (LIFIPVTVFGKTLFFLFIGLV) traverse the membrane as a helical segment. Over 629 to 777 (LGAFGSDTVE…WNNFRRQLMM (149 aa)) the chain is Cytoplasmic. The III repeat unit spans residues 770-1074 (NFRRQLMMVC…QNYYNTLKKL (305 aa)). Residues 778-797 (VCENKYFETGVLVIIFASSI) traverse the membrane as a helical segment. Residues 798-815 (LLAFEDIYLNEKPRLKLA) lie on the Extracellular side of the membrane. Residues 816-837 (IFYLDITFCLLFFLEMVLKLVA) form a helical membrane-spanning segment. The Cytoplasmic portion of the chain corresponds to 838–846 (LGFVHYYTH). Residues 847-868 (FWTILDFTIVIITVISLAASGL) form a helical membrane-spanning segment. The Extracellular portion of the chain corresponds to 869 to 874 (GMEQIT). The helical; Voltage-sensor transmembrane segment at 875-898 (AFRSLRTLRALRPLRAVSRWQGMK) threads the bilayer. Residues 899-915 (IIVNALMLSIPSIFNVL) are Cytoplasmic-facing. Residues 916-937 (LVCVVFWLIFAIMGVQLFAGKF) form a helical membrane-spanning segment. Topologically, residues 938–976 (YKCVNETNMRIPPTEVANKIECYNKNYTWVNSNVNFDNV) are extracellular. Asparagine 942 and asparagine 963 each carry an N-linked (GlcNAc...) asparagine glycan. The segment at residues 977-998 (GGAFLALFQVATFEGWMEIMAD) is an intramembrane region (pore-forming). Topologically, residues 999–1009 (AVDVTEVDEQP) are extracellular. A helical transmembrane segment spans residues 1010–1022 (KFEATVYYYFYFV). Over 1023 to 1100 (LFIIFGSFFV…QAVVYDLVMS (78 aa)) the chain is Cytoplasmic. Threonine 1076 is modified (phosphothreonine; by PKC). The IV repeat unit spans residues 1083–1386 (VKRPKNKCQA…WEQYDPLATQ (304 aa)). The helical transmembrane segment at 1101–1120 (NQFEIFITTIIITNMIFMAF) threads the bilayer. Residues 1121 to 1132 (EHYNQSEVVTEV) lie on the Extracellular side of the membrane. Asparagine 1124 carries an N-linked (GlcNAc...) asparagine glycan. The helical transmembrane segment at 1133-1154 (LATANIAFTILYAVEAIIKIIG) threads the bilayer. The Cytoplasmic portion of the chain corresponds to 1155 to 1162 (LRIHYLRN). Residues 1163–1184 (LWNVFDFLVVTLSVMDAFLNDI) form a helical membrane-spanning segment. The Extracellular portion of the chain corresponds to 1185–1194 (FGDGIFMNPS). The chain crosses the membrane as a helical; Voltage-sensor span at residues 1195-1218 (LLRVARMFRIGRIIRLIKWAKGMR). At 1219–1236 (KLLFALVISLPALFNIGA) the chain is on the cytoplasmic side. A helical transmembrane segment spans residues 1237 to 1258 (LLMLVMFIYTIIGMSSFGQIKL). Over 1259-1270 (SGALNDQVNFQT) the chain is Extracellular. Residues 1271–1293 (FGKTFLLLVRLATSAGWNDILGP) constitute an intramembrane region (pore-forming). The Extracellular portion of the chain corresponds to 1294-1323 (LLIQPPNCDPNYITTSTGEKIKVVNGDCGM). Residues 1324-1346 (PWLAISYMVSYIIIVFMIVFNMY) traverse the membrane as a helical segment. The Cytoplasmic segment spans residues 1347–1522 (IAVILENFNQ…FIISAPETAV (176 aa)).

It belongs to the sodium channel (TC 1.A.1.10) family.

It localises to the cell membrane. Mediates the voltage-dependent sodium ion permeability of excitable membranes. Assuming opened or closed conformations in response to the voltage difference across the membrane, the protein forms a sodium-selective channel through which Na(+) ions may pass in accordance with their electrochemical gradient. The chain is Sodium channel protein 1 brain from Heterololigo bleekeri (Spear squid).